Reading from the N-terminus, the 715-residue chain is Polyribonucleotide nucleotidyltransferase (715 aa).

The Mg(2+) site is built by Asp-498 and Asp-504. The 61-residue stretch at 565–625 (PKVCMMQIKP…ETVKKTVAFI (61 aa)) folds into the KH domain. The 72-residue stretch at 635–706 (GTCYQASILR…DRGRIDFLLL (72 aa)) folds into the S1 motif domain.

This sequence belongs to the polyribonucleotide nucleotidyltransferase family. The cofactor is Mg(2+).

It localises to the cytoplasm. The enzyme catalyses RNA(n+1) + phosphate = RNA(n) + a ribonucleoside 5'-diphosphate. Involved in mRNA degradation. Catalyzes the phosphorolysis of single-stranded polyribonucleotides processively in the 3'- to 5'-direction. The polypeptide is Polyribonucleotide nucleotidyltransferase (Onion yellows phytoplasma (strain OY-M)).